A 1600-amino-acid chain; its full sequence is A disintegrin and metalloproteinase with thrombospondin motifs 12 (1600 aa).

Positions 1 to 25 (MPCARGSWLAKLSIVAQLINFGAFC) are cleaved as a signal peptide. The propeptide occupies 26–244 (HGRQTQPWPV…TLRSRSLSRR (219 aa)). The N-linked (GlcNAc...) asparagine glycan is linked to N105. The short motif at 210 to 217 (PICGLKDS) is the Cysteine switch element. C212 contacts Zn(2+). Residues 250 to 460 (RWVETLVVAD…GRGFCLDDIP (211 aa)) form the Peptidase M12B domain. Intrachain disulfides connect C326–C380, C355–C362, C374–C455, C413–C439, C482–C505, C493–C511, C500–C530, C524–C535, C558–C595, C562–C600, and C573–C585. Zn(2+) is bound at residue H396. Residue E397 is part of the active site. H400 and H406 together coordinate Zn(2+). Positions 469–548 (VIAPGVIYDV…GKKPESIPGG (80 aa)) constitute a Disintegrin domain. 4 TSP type-1 domains span residues 546-601 (PGGW…HPCR), 827-887 (KLLY…KDCP), 891-947 (WAGE…RDIL), and 948-1001 (CPSD…QQCP). Residues 705 to 831 (CQTVKKLFRQ…DNDVEKLLYF (127 aa)) form a spacer 1 region. The tract at residues 1001–1321 (PFSRRVLKPN…HLMKDHSPAY (321 aa)) is spacer 2. 2 disordered regions span residues 1006 to 1140 (VLKP…LSSS) and 1158 to 1179 (PEVE…KDKS). The span at 1038-1047 (PTPLSTPTVP) shows a compositional bias: low complexity. Residues 1048-1107 (ESMSTSTPTINSLGSTIASQEDANGMGWQNNSTQAEEGSHFPTSSGSTSQVPVTSWSLSI) show a composition bias toward polar residues. The segment covering 1130-1140 (TTTSDSGLSSS) has biased composition (low complexity). TSP type-1 domains lie at 1318-1371 (SPAY…RPCA), 1373-1428 (WRVG…CNLE), 1429-1477 (PCGE…NRHL), and 1478-1538 (CCHW…QACR). Residues 1541 to 1581 (ADLTCLKDRLSISFCQTLKSMRKCSVPSVRAQCCLSCPQAP) form the PLAC domain.

Interacts with COMP. Zn(2+) serves as cofactor. The precursor is cleaved by a furin endopeptidase. In terms of processing, subjected to an intracellular maturation process yielding a 120 kDa N-terminal fragment containing the metalloproteinase, disintegrin, one TSP type-1 and the Cys-rich domains and a 83 kDa C-terminal fragment containing the spacer 2 and four TSP type-1 domains. Post-translationally, glycosylated. Can be O-fucosylated by POFUT2 on a serine or a threonine residue found within the consensus sequence C1-X(2)-(S/T)-C2-G of the TSP type-1 repeat domains where C1 and C2 are the first and second cysteine residue of the repeat, respectively. Fucosylated repeats can then be further glycosylated by the addition of a beta-1,3-glucose residue by the glucosyltransferase, B3GALTL. Fucosylation mediates the efficient secretion of ADAMTS family members. Can also be C-glycosylated with one or two mannose molecules on tryptophan residues within the consensus sequence W-X-X-W of the TPRs, and N-glycosylated. These other glycosylations can also facilitate secretion.

The protein localises to the secreted. It localises to the extracellular space. It is found in the extracellular matrix. Inhibited by alpha-2 macroglobulin. Metalloprotease that plays a role in the degradation of COMP. Also cleaves alpha-2 macroglobulin and aggregan. Has anti-tumorigenic properties. The chain is A disintegrin and metalloproteinase with thrombospondin motifs 12 (Adamts12) from Mus musculus (Mouse).